The chain runs to 195 residues: Glutathione S-transferase class-mu 26 kDa isozyme (195 aa).

Residues 1 to 83 (MAPKLGYWKI…YIADKHNMLG (83 aa)) enclose the GST N-terminal domain. Glutathione-binding positions include 7-8 (YW), 41-45 (WRNEK), 54-55 (NL), and 67-68 (QS). The 111-residue stretch at 85 to 195 (CPKERAEISM…TFGGGDAPPK (111 aa)) folds into the GST C-terminal domain. Y111 contributes to the substrate binding site.

Belongs to the GST superfamily. Mu family. As to quaternary structure, homodimer.

It carries out the reaction RX + glutathione = an S-substituted glutathione + a halide anion + H(+). Functionally, conjugation of reduced glutathione to a wide number of exogenous and endogenous hydrophobic electrophiles. Its function is as follows. GST isoenzymes appear to play a central role in the parasite detoxification system. Other functions are also suspected including a role in increasing the solubility of haematin in the parasite gut. The protein is Glutathione S-transferase class-mu 26 kDa isozyme of Schistosoma mansoni (Blood fluke).